The following is a 175-amino-acid chain: Alkyl hydroperoxide reductase AhpD (175 aa).

Residue cysteine 131 is the Proton donor of the active site. Cysteine 131 and cysteine 134 are disulfide-bonded. Cysteine 134 (cysteine sulfenic acid (-SOH) intermediate) is an active-site residue.

The protein belongs to the AhpD family.

It catalyses the reaction N(6)-[(R)-dihydrolipoyl]-L-lysyl-[lipoyl-carrier protein] + a hydroperoxide = N(6)-[(R)-lipoyl]-L-lysyl-[lipoyl-carrier protein] + an alcohol + H2O. In terms of biological role, antioxidant protein with alkyl hydroperoxidase activity. Required for the reduction of the AhpC active site cysteine residues and for the regeneration of the AhpC enzyme activity. This is Alkyl hydroperoxide reductase AhpD from Brucella canis (strain ATCC 23365 / NCTC 10854 / RM-666).